We begin with the raw amino-acid sequence, 204 residues long: Chaperone protein TorD (204 aa).

The protein belongs to the TorD/DmsD family. TorD subfamily.

The protein localises to the cytoplasm. Functionally, involved in the biogenesis of TorA. Acts on TorA before the insertion of the molybdenum cofactor and, as a result, probably favors a conformation of the apoenzyme that is competent for acquiring the cofactor. The chain is Chaperone protein TorD from Shewanella baltica (strain OS223).